The chain runs to 371 residues: Lipoyl synthase, mitochondrial (371 aa).

The transit peptide at 1-24 directs the protein to the mitochondrion; the sequence is MLSRFKCSRLQLQKRAISVTKATT. A compositionally biased stretch (polar residues) spans 20-29; it reads TKATTTTASQ. The disordered stretch occupies residues 20–42; the sequence is TKATTTTASQPKRRRTTTFSDAL. [4Fe-4S] cluster contacts are provided by Cys107, Cys112, Cys118, Cys138, Cys142, Cys145, and Ser353. The Radical SAM core domain maps to 121-342; sequence GGDSSKATAT…RDKALELGFL (222 aa).

Belongs to the radical SAM superfamily. Lipoyl synthase family. The cofactor is [4Fe-4S] cluster.

The protein localises to the mitochondrion. It carries out the reaction [[Fe-S] cluster scaffold protein carrying a second [4Fe-4S](2+) cluster] + N(6)-octanoyl-L-lysyl-[protein] + 2 oxidized [2Fe-2S]-[ferredoxin] + 2 S-adenosyl-L-methionine + 4 H(+) = [[Fe-S] cluster scaffold protein] + N(6)-[(R)-dihydrolipoyl]-L-lysyl-[protein] + 4 Fe(3+) + 2 hydrogen sulfide + 2 5'-deoxyadenosine + 2 L-methionine + 2 reduced [2Fe-2S]-[ferredoxin]. Its pathway is protein modification; protein lipoylation via endogenous pathway; protein N(6)-(lipoyl)lysine from octanoyl-[acyl-carrier-protein]: step 2/2. Catalyzes the radical-mediated insertion of two sulfur atoms into the C-6 and C-8 positions of the octanoyl moiety bound to the lipoyl domains of lipoate-dependent enzymes, thereby converting the octanoylated domains into lipoylated derivatives. The polypeptide is Lipoyl synthase, mitochondrial (Lachancea thermotolerans (strain ATCC 56472 / CBS 6340 / NRRL Y-8284) (Yeast)).